The sequence spans 368 residues: Phosphate acyltransferase (368 aa).

Residues 337–368 (LGEGEHNAGGAGHASPAAGHHAEPSAAQSSKA) form a disordered region. Low complexity predominate over residues 349 to 368 (HASPAAGHHAEPSAAQSSKA).

Belongs to the PlsX family. Homodimer. Probably interacts with PlsY.

It is found in the cytoplasm. It catalyses the reaction a fatty acyl-[ACP] + phosphate = an acyl phosphate + holo-[ACP]. It participates in lipid metabolism; phospholipid metabolism. Catalyzes the reversible formation of acyl-phosphate (acyl-PO(4)) from acyl-[acyl-carrier-protein] (acyl-ACP). This enzyme utilizes acyl-ACP as fatty acyl donor, but not acyl-CoA. The protein is Phosphate acyltransferase of Burkholderia lata (strain ATCC 17760 / DSM 23089 / LMG 22485 / NCIMB 9086 / R18194 / 383).